The primary structure comprises 507 residues: Arylsulfatase A (507 aa).

Residues 1–18 (MEALWTLTLALAAGLAAA) form the signal peptide. Asp29, Asp30, and Cys69 together coordinate Ca(2+). Cys69 functions as the Nucleophile in the catalytic mechanism. Cys69 is subject to 3-oxoalanine (Cys). Lys123 is a binding site for substrate. His125 is a catalytic residue. Ser150 contributes to the substrate binding site. 2 cysteine pairs are disulfide-bonded: Cys156–Cys172 and Cys161–Cys168. A glycan (N-linked (GlcNAc...) asparagine) is linked at Asn158. Asn184 is a glycosylation site (N-linked (GlcNAc...) asparagine). His229 contributes to the substrate binding site. 2 residues coordinate Ca(2+): Asp281 and Asn282. 4 cysteine pairs are disulfide-bonded: Cys300/Cys414, Cys488/Cys500, Cys489/Cys502, and Cys493/Cys499. A substrate-binding site is contributed by Lys302. N-linked (GlcNAc...) asparagine glycosylation is present at Asn350.

Belongs to the sulfatase family. Homodimer at neutral pH and homooctamer at acidic pH. Exists both as a single chain of 58 kDa (component A) or as a chain of 50 kDa (component B) linked by disulfide bond(s) to a 7 kDa chain (component C). Interacts with SUMF1. Requires Ca(2+) as cofactor. Post-translationally, the conversion to 3-oxoalanine (also known as C-formylglycine, FGly), of a serine or cysteine residue in prokaryotes and of a cysteine residue in eukaryotes, is critical for catalytic activity. This post-translational modification is severely defective in multiple sulfatase deficiency (MSD).

Its subcellular location is the endoplasmic reticulum. The protein resides in the lysosome. It catalyses the reaction an N-acyl-1-beta-D-(3-O-sulfo)-galactosyl-sphing-4-enine + H2O = a beta-D-galactosyl-(1&lt;-&gt;1')-N-acylsphing-4-enine + sulfate + H(+). Hydrolyzes cerebroside sulfate. This chain is Arylsulfatase A (ARSA), found in Bos taurus (Bovine).